The following is a 380-amino-acid chain: Homeobox protein ceh-6 (380 aa).

Positions 1-25 are enriched in low complexity; that stretch reads MLIPSSSSIPSSLSASASDSEPSSL. Disordered stretches follow at residues 1-31, 167-190, and 265-286; these read MLIPSSSSIPSSLSASASDSEPSSLNGSGIS, SGSVSGAGGPHQPLSDISDDSEQT, and GSPNSTFEKMTGQAGRKRKKRT. The POU-specific domain maps to 187–261; sequence SEQTCPDDLE…LLFKWLEEAD (75 aa). The segment at residues 281–340 is a DNA-binding region (homeobox); that stretch reads KRKKRTSIEVNVKSRLEFHFQSNQKPNAQEITQVAMELQLEKEVVRVWFCNRRQKEKRIA.

It belongs to the POU transcription factor family. Class-3 subfamily. In terms of assembly, interacts with egl-27, sox-2 and sem-4. Interacts with wdr-5.1. As to expression, expressed in a series of neurons in the ring ganglia, excretory cell, dividing neuroblasts in the ventral cord and rectal cells.

It localises to the nucleus. Vital for embryonic development and essential for the proper function of the excretory cell. Required for the transdifferentiation of the Y rectal epithelial cell to the PDA motor neuron during larval development. This is Homeobox protein ceh-6 from Caenorhabditis elegans.